An 80-amino-acid polypeptide reads, in one-letter code: Beta-toxin KAaH2 (80 aa).

A signal peptide spans 1–22; it reads MMKLMLFSIIVILFSLIGSIHG. One can recognise an LCN-type CS-alpha/beta domain in the interval 25 to 80; that stretch reads VPGNYPLDSSDDTYLCAPLGENPSCIQICRKHGVKYGYCYAFQCWCEYLEDKNVKI. 3 disulfides stabilise this stretch: cysteine 40–cysteine 63, cysteine 49–cysteine 68, and cysteine 53–cysteine 70.

This sequence belongs to the long (3 C-C) scorpion toxin superfamily. Sodium/Potassium channel inhibitor family. In terms of tissue distribution, expressed by the venom gland.

The protein localises to the secreted. In terms of biological role, weakly inhibits the vertebrate potassium channel Kv1.1/KCNA1. The protein is Beta-toxin KAaH2 of Androctonus australis (Sahara scorpion).